The following is a 287-amino-acid chain: Ciliary microtubule inner protein 6 (287 aa).

Basic and acidic residues-rich tracts occupy residues 1 to 15 (MEEK…KIED) and 25 to 34 (EEIKHEEKPG). The disordered stretch occupies residues 1 to 42 (MEEKEDKHQQHKIEDAAITYVSENEEIKHEEKPGKSIHHSKS). Positions 128-160 (GIVPLASPGTSAELQNNFIEYISFIHQYDARKT) are mn 1. The segment at 179–287 (KPGSRPTVPK…PLNPPIKKSE (109 aa)) is disordered. Basic and acidic residues-rich tracts occupy residues 203–212 (EQSKKTEKGN) and 232–245 (LEPK…DVRQ). Residues 213-246 (SAESRMISPGLCQQNSQELLEPKTHLSETDVRQA) are mn 2.

Its subcellular location is the cell projection. It localises to the cilium. This chain is Ciliary microtubule inner protein 6, found in Homo sapiens (Human).